We begin with the raw amino-acid sequence, 2152 residues long: Oxygen-regulated protein 1 (2152 aa).

The segment covering 1 to 19 (MSDTPSTGFSIIHPTSSED) has biased composition (polar residues). Residues 1-25 (MSDTPSTGFSIIHPTSSEDQVPPPR) form a disordered region. 2 consecutive Doublecortin domains span residues 36 to 118 (KRIS…VDLD) and 154 to 233 (RSLV…GNYD). Disordered regions lie at residues 353–375 (VSKT…RTES), 1435–1455 (DMEE…MTSS), and 1587–1616 (DWSD…ELAQ).

Interacts (via the doublecortin domains) with microtubules. Interacts with RP1L1. Interacts with MAK.

Its subcellular location is the cytoplasm. It is found in the cytoskeleton. The protein resides in the cilium axoneme. It localises to the cell projection. The protein localises to the cilium. Its subcellular location is the photoreceptor outer segment. Microtubule-associated protein regulating the stability and length of the microtubule-based axoneme of photoreceptors. Required for the differentiation of photoreceptor cells, it plays a role in the organization of the outer segment of rod and cone photoreceptors ensuring the correct orientation and higher-order stacking of outer segment disks along the photoreceptor axoneme. In Papio hamadryas (Hamadryas baboon), this protein is Oxygen-regulated protein 1 (RP1).